We begin with the raw amino-acid sequence, 303 residues long: Elongation factor Ts (303 aa).

The interval 79–82 is involved in Mg(2+) ion dislocation from EF-Tu; sequence TDFV.

The protein belongs to the EF-Ts family.

It localises to the cytoplasm. Associates with the EF-Tu.GDP complex and induces the exchange of GDP to GTP. It remains bound to the aminoacyl-tRNA.EF-Tu.GTP complex up to the GTP hydrolysis stage on the ribosome. The polypeptide is Elongation factor Ts (Syntrophotalea carbinolica (strain DSM 2380 / NBRC 103641 / GraBd1) (Pelobacter carbinolicus)).